A 136-amino-acid chain; its full sequence is Glutamyl-tRNA(Gln) amidotransferase subunit C, mitochondrial (136 aa).

Residues 1–27 (MWARAVHLGLRAAARGRRGFTSKADPQ) constitute a mitochondrion transit peptide.

It belongs to the GatC family. In terms of assembly, subunit of the heterotrimeric GatCAB amidotransferase (AdT) complex, composed of A (QRSL1), B (GATB) and C (GATC) subunits.

Its subcellular location is the mitochondrion. The enzyme catalyses L-glutamyl-tRNA(Gln) + L-glutamine + ATP + H2O = L-glutaminyl-tRNA(Gln) + L-glutamate + ADP + phosphate + H(+). In terms of biological role, allows the formation of correctly charged Gln-tRNA(Gln) through the transamidation of misacylated Glu-tRNA(Gln) in the mitochondria. The reaction takes place in the presence of glutamine and ATP through an activated gamma-phospho-Glu-tRNA(Gln). The polypeptide is Glutamyl-tRNA(Gln) amidotransferase subunit C, mitochondrial (Bos taurus (Bovine)).